We begin with the raw amino-acid sequence, 288 residues long: Eukaryotic translation initiation factor 3 subunit G (288 aa).

Residues Met-1–Gln-35 are disordered. Residues Ala-11 to Asn-20 are compositionally biased toward acidic residues. Residues Glu-21–Gln-35 are compositionally biased toward polar residues. An RRM domain is found at Ala-208–Lys-286.

This sequence belongs to the eIF-3 subunit G family. Component of the eukaryotic translation initiation factor 3 (eIF-3) complex.

The protein localises to the cytoplasm. RNA-binding component of the eukaryotic translation initiation factor 3 (eIF-3) complex, which is involved in protein synthesis of a specialized repertoire of mRNAs and, together with other initiation factors, stimulates binding of mRNA and methionyl-tRNAi to the 40S ribosome. The eIF-3 complex specifically targets and initiates translation of a subset of mRNAs involved in cell proliferation. This subunit can bind 18S rRNA. The polypeptide is Eukaryotic translation initiation factor 3 subunit G (tif35) (Botryotinia fuckeliana (strain B05.10) (Noble rot fungus)).